Consider the following 1286-residue polypeptide: DNA-directed RNA polymerase 147 kDa polypeptide (1286 aa).

It belongs to the poxviridae DNA-directed RNA polymerase 147 kDa subunit family. In terms of assembly, the DNA-dependent RNA polymerase used for intermediate and late genes expression consists of eight subunits Rpo30/OPG66, Rpo7/OPG90, Rpo22/OPG103, Rpo147/OPG105, Rpo18/OPG119, Rpo19/OPG131, Rpo132/OPG151 and Rpo35/OPG156. The same holoenzyme, with the addition of the transcription-specificity factor OPG109, is used for early gene expression.

It is found in the virion. The enzyme catalyses RNA(n) + a ribonucleoside 5'-triphosphate = RNA(n+1) + diphosphate. Part of the DNA-dependent RNA polymerase which catalyzes the transcription of viral DNA into RNA using the four ribonucleoside triphosphates as substrates. Responsible for the transcription of early, intermediate and late genes. DNA-dependent RNA polymerase associates with the early transcription factor (ETF), itself composed of OPG118 and OPG133, thereby allowing the early genes transcription. Late transcription, and probably also intermediate transcription, require newly synthesized RNA polymerase. This chain is DNA-directed RNA polymerase 147 kDa polypeptide (OPG105), found in Vaccinia virus (strain Ankara) (VACV).